The chain runs to 2837 residues: Bifunctional DNA-directed RNA polymerase subunit beta-beta' (2837 aa).

A DNA-directed RNA polymerase subunit beta region spans residues 1–1433 (MVDSSYMYAS…CLNVDLKQND (1433 aa)). Positions 1436–2837 (IEDISHTNIA…ESVVAYDQSN (1402 aa)) are DNA-directed RNA polymerase subunit beta'. Zn(2+) contacts are provided by cysteine 1501, cysteine 1503, cysteine 1516, and cysteine 1519. Aspartate 1893, aspartate 1895, and aspartate 1897 together coordinate Mg(2+). Residues cysteine 2235, cysteine 2309, cysteine 2316, and cysteine 2319 each coordinate Zn(2+).

This sequence in the N-terminal section; belongs to the RNA polymerase beta chain family. In the C-terminal section; belongs to the RNA polymerase beta' chain family. In terms of assembly, the RNAP catalytic core consists of 2 alpha, 1 beta/beta' and 1 omega subunit. When a sigma factor is associated with the core the holoenzyme is formed, which can initiate transcription. The cofactor is Mg(2+). Zn(2+) serves as cofactor.

It catalyses the reaction RNA(n) + a ribonucleoside 5'-triphosphate = RNA(n+1) + diphosphate. Its function is as follows. DNA-dependent RNA polymerase catalyzes the transcription of DNA into RNA using the four ribonucleoside triphosphates as substrates. In Wolbachia pipientis wMel, this protein is Bifunctional DNA-directed RNA polymerase subunit beta-beta' (rpoBC).